Here is a 463-residue protein sequence, read N- to C-terminus: V-type ATP synthase beta chain (463 aa).

It belongs to the ATPase alpha/beta chains family.

Functionally, produces ATP from ADP in the presence of a proton gradient across the membrane. The V-type beta chain is a regulatory subunit. The polypeptide is V-type ATP synthase beta chain (Halothermothrix orenii (strain H 168 / OCM 544 / DSM 9562)).